The chain runs to 142 residues: Small ribosomal subunit protein uS12 (142 aa).

Belongs to the universal ribosomal protein uS12 family. Part of the 30S ribosomal subunit.

Its function is as follows. With S4 and S5 plays an important role in translational accuracy. Located at the interface of the 30S and 50S subunits. The sequence is that of Small ribosomal subunit protein uS12 from Methanocorpusculum labreanum (strain ATCC 43576 / DSM 4855 / Z).